A 307-amino-acid chain; its full sequence is DDRGK domain-containing protein 1 (307 aa).

The Lumenal segment spans residues 1-2 (MD). The chain crosses the membrane as a helical span at residues 3 to 23 (LILLVGIAVALLVILATLYFL). Topologically, residues 24–307 (QNKNKAAGEA…PVQSAAGGDS (284 aa)) are cytoplasmic. Composition is skewed to low complexity over residues 32–43 (EAKPAAAAPRRG) and 54–83 (RRAQIARNQRNRLQQNAPAPAPEAVAPAAA). The segment at 32–162 (EAKPAAAAPR…EEVEAEAERK (131 aa)) is disordered. The segment covering 117 to 162 (KMEAKEQKRLQREHELQEREKRKVKEAKEDAERKQQEEVEAEAERK) has biased composition (basic and acidic residues).

The protein belongs to the DDRGK1 family. Interacts with Atg9; the interaction is transient.

The protein localises to the endoplasmic reticulum membrane. Substrate adapter for ufmylation, the covalent attachment of the ubiquitin-like modifier UFM1 to substrate proteins. Required for ufmylation of Atg9; protects the nervous system during aging, possibly by stabilizing Atg9 and supporting its function. In Drosophila willistoni (Fruit fly), this protein is DDRGK domain-containing protein 1.